The following is an 890-amino-acid chain: Leucine--tRNA ligase (890 aa).

The 'HIGH' region motif lies at 48 to 58; it reads PYPSGKLHMGH. A 'KMSKS' region motif is present at residues 645-649; that stretch reads KMSKS. Lys-648 is an ATP binding site.

It belongs to the class-I aminoacyl-tRNA synthetase family.

It is found in the cytoplasm. The catalysed reaction is tRNA(Leu) + L-leucine + ATP = L-leucyl-tRNA(Leu) + AMP + diphosphate. The sequence is that of Leucine--tRNA ligase from Polynucleobacter necessarius subsp. necessarius (strain STIR1).